The primary structure comprises 231 residues: MAAAEMERTMSFDAAEKLKAADGGGGEVDDELEEGEIVEESNDTASYLGKEITVKHPLEHSWTFWFDNSTTKSRQTAWGSSLRNLYTFSTVEDFWGAYNNIHHPSKLIMGADFHCFKHKIEPQWEDPVCANGGTWKMSFSKGKSDTSWLYTLLAMIGHQFDHGDEICGAVVSVRAKGEKIALWTKNAANETAQVSIGKQWKQFLDYSDSVGFIFHDDAKRLDRSAKNRYTV.

EIF4G-binding regions lie at residues 56–59 and 66–102; these read HPLE and FDNSTTKSRQTAWGSSLRNLYTFSTVEDFWGAYNNIH. MRNA-binding positions include 74–79, lysine 106, and 124–125; these read RQTAWG and WE. The cysteines at positions 129 and 167 are disulfide-linked. Residues 150–159 form an EIF4G-binding region; that stretch reads YTLLAMIGHQ. Residues 174–179 and 219–223 each bind mRNA; these read RAKGEK and KRLDR.

It belongs to the eukaryotic initiation factor 4E family. EIF4F is a multi-subunit complex, the composition of which varies with external and internal environmental conditions. It is composed of at least EIF4A, EIF4E and EIF4G. EIF4E is also known to interact with other partners. In higher plants two isoforms of EIF4F have been identified, named isoform EIF4F and isoform EIF(iso)4F. Isoform EIF4F has subunits p220 and p26, whereas isoform EIF(iso)4F has subunits p82 and p28. As to quaternary structure, (Microbial infection) Interacts with potyvirus viral genome-linked protein (VPg); this interaction is possible in susceptible hosts but impaired in resistant plants. Post-translationally, according to the redox status, the Cys-129-Cys-167 disulfide bridge may have a role in regulating protein function by affecting its ability to bind capped mRNA.

The protein resides in the nucleus. The protein localises to the cytoplasm. In terms of biological role, component of the protein complex eIF4F, which is involved in the recognition of the mRNA cap, ATP-dependent unwinding of 5'-terminal secondary structure and recruitment of mRNA to the ribosome. Recognizes and binds the 7-methylguanosine-containing mRNA cap during an early step in the initiation of protein synthesis and facilitates ribosome binding by inducing the unwinding of the mRNAs secondary structures. Key component of recessive resistance to potyviruses. Functionally, (Microbial infection) Susceptibility host factor required for viral infection (e.g. pepper mottle virus (PepMoV), potato virus Y (PVY) and tobacco etch virus (TEV)) by recruiting viral RNAs to the host ribosomal complex via an interaction with viral genome-linked protein (VPg). The protein is Eukaryotic translation initiation factor 4E-1 of Solanum habrochaites (Wild tomato).